A 341-amino-acid chain; its full sequence is S-adenosylmethionine:tRNA ribosyltransferase-isomerase (341 aa).

This sequence belongs to the QueA family. Monomer.

It localises to the cytoplasm. It catalyses the reaction 7-aminomethyl-7-carbaguanosine(34) in tRNA + S-adenosyl-L-methionine = epoxyqueuosine(34) in tRNA + adenine + L-methionine + 2 H(+). The protein operates within tRNA modification; tRNA-queuosine biosynthesis. Its function is as follows. Transfers and isomerizes the ribose moiety from AdoMet to the 7-aminomethyl group of 7-deazaguanine (preQ1-tRNA) to give epoxyqueuosine (oQ-tRNA). This chain is S-adenosylmethionine:tRNA ribosyltransferase-isomerase, found in Clostridium perfringens (strain SM101 / Type A).